The sequence spans 163 residues: Nucleotide-binding protein Npun_R4736 (163 aa).

This sequence belongs to the YajQ family.

Its function is as follows. Nucleotide-binding protein. This Nostoc punctiforme (strain ATCC 29133 / PCC 73102) protein is Nucleotide-binding protein Npun_R4736.